Reading from the N-terminus, the 455-residue chain is ATP-dependent protease ATPase subunit HslU (455 aa).

ATP contacts are provided by residues Val23, 65 to 70, Asp266, Glu333, and Arg405; that span reads GVGKTE.

It belongs to the ClpX chaperone family. HslU subfamily. In terms of assembly, a double ring-shaped homohexamer of HslV is capped on each side by a ring-shaped HslU homohexamer. The assembly of the HslU/HslV complex is dependent on binding of ATP.

The protein resides in the cytoplasm. Functionally, ATPase subunit of a proteasome-like degradation complex; this subunit has chaperone activity. The binding of ATP and its subsequent hydrolysis by HslU are essential for unfolding of protein substrates subsequently hydrolyzed by HslV. HslU recognizes the N-terminal part of its protein substrates and unfolds these before they are guided to HslV for hydrolysis. The protein is ATP-dependent protease ATPase subunit HslU of Xanthomonas axonopodis pv. citri (strain 306).